A 530-amino-acid chain; its full sequence is Glucose-6-phosphate isomerase (530 aa).

Glu-322 serves as the catalytic Proton donor. Catalysis depends on residues His-351 and Lys-455.

Belongs to the GPI family.

The protein resides in the cytoplasm. It carries out the reaction alpha-D-glucose 6-phosphate = beta-D-fructose 6-phosphate. Its pathway is carbohydrate biosynthesis; gluconeogenesis. It functions in the pathway carbohydrate degradation; glycolysis; D-glyceraldehyde 3-phosphate and glycerone phosphate from D-glucose: step 2/4. In terms of biological role, catalyzes the reversible isomerization of glucose-6-phosphate to fructose-6-phosphate. This chain is Glucose-6-phosphate isomerase, found in Citrifermentans bemidjiense (strain ATCC BAA-1014 / DSM 16622 / JCM 12645 / Bem) (Geobacter bemidjiensis).